The chain runs to 427 residues: MQTIIWNHLSETEKRKVIMRPVQQNGENIQQAVNAIRENVAYNGDRALFELCEKFDGVKLDKLIVSADEIQAASSRISVKLRNAIEQAKTNIEAFHKAQQNQEIDLEIQEGVRCQVVTRPISCVGLYIPGGSAPLFSTVLMLAIPAKIAGCKKIVLCSPPPISDEILYTAHLCGVETIYAIGGAQAVFAMAQGTESVAKVDKIFGPGNAFVTEAKRQVAQNSTAIDMPAGPSEVLVIADESADPEFVASDLLSQAEHGADSQVILVATCETLAKETALAIERQLALLPRAETARKALNHSRIFIAESLEQAVEISNEYAPEHLIVQTKNARKLLPYLDNAGSIFLGAYSPESMGDYASGTNHVLPTYGYTKTYSSLGLADFSKRMTVQELTPKGFKNLAETVEVMAEAEQLAAHKMAVSVRLAKLNI.

NAD(+)-binding residues include Tyr127, Gln185, and Asn208. Substrate is bound by residues Ser232, Gln254, and His257. Zn(2+) is bound by residues Gln254 and His257. Residues Glu321 and His322 each act as proton acceptor in the active site. His322, Asp355, Glu409, and His414 together coordinate substrate. Asp355 serves as a coordination point for Zn(2+). His414 serves as a coordination point for Zn(2+).

Belongs to the histidinol dehydrogenase family. The cofactor is Zn(2+).

It catalyses the reaction L-histidinol + 2 NAD(+) + H2O = L-histidine + 2 NADH + 3 H(+). The protein operates within amino-acid biosynthesis; L-histidine biosynthesis; L-histidine from 5-phospho-alpha-D-ribose 1-diphosphate: step 9/9. Functionally, catalyzes the sequential NAD-dependent oxidations of L-histidinol to L-histidinaldehyde and then to L-histidine. The chain is Histidinol dehydrogenase from Haemophilus influenzae (strain 86-028NP).